The sequence spans 151 residues: 3-hydroxyacyl-[acyl-carrier-protein] dehydratase FabZ (151 aa).

His57 is an active-site residue.

The protein belongs to the thioester dehydratase family. FabZ subfamily.

The protein resides in the cytoplasm. It catalyses the reaction a (3R)-hydroxyacyl-[ACP] = a (2E)-enoyl-[ACP] + H2O. Involved in unsaturated fatty acids biosynthesis. Catalyzes the dehydration of short chain beta-hydroxyacyl-ACPs and long chain saturated and unsaturated beta-hydroxyacyl-ACPs. This is 3-hydroxyacyl-[acyl-carrier-protein] dehydratase FabZ from Tolumonas auensis (strain DSM 9187 / NBRC 110442 / TA 4).